A 611-amino-acid polypeptide reads, in one-letter code: Translation initiation factor RLI1 (611 aa).

2 consecutive 4Fe-4S ferredoxin-type domains span residues 7–31 and 46–75; these read RVAI…SCPV and RIAF…IINL. 2 consecutive ABC transporter domains span residues 77 to 318 and 345 to 565; these read TNLE…FLDG and AEKS…LKNL. ATP-binding positions include 110 to 117 and 382 to 389; these read GTNGIGKS and GENGTGKT.

Belongs to the ABC transporter superfamily. ABCE family. As to quaternary structure, component of the multifactor complex (MFC). The complex associates with pre-initiation complexes.

The protein localises to the cytoplasm. The protein resides in the nucleus. In terms of biological role, component of the multifactor complex (MFC) involved in translation initiation. Required for the binding of MFC to the 40S ribosome. Required for the processing and nuclear export of the 60S and 40S ribosomal subunits. This Chaetomium thermophilum (strain DSM 1495 / CBS 144.50 / IMI 039719) (Thermochaetoides thermophila) protein is Translation initiation factor RLI1 (RLI1).